Reading from the N-terminus, the 119-residue chain is Probable prefoldin subunit 6 (119 aa).

This sequence belongs to the prefoldin subunit beta family. In terms of assembly, heterohexamer of two PFD-alpha type and four PFD-beta type subunits. May interact with MSP1.

Functionally, binds specifically to cytosolic chaperonin (c-CPN) and transfers target proteins to it. Binds to nascent polypeptide chain and promotes folding in an environment in which there are many competing pathways for nonnative proteins. The sequence is that of Probable prefoldin subunit 6 from Plasmodium falciparum (isolate 3D7).